Reading from the N-terminus, the 480-residue chain is Nuclear receptor subfamily 6 group A member 1 (480 aa).

The segment at 1–32 (MERDEPPPSGGGGGGGSAGFLEPPAALPPPPR) is disordered. The nuclear receptor DNA-binding region spans 57-132 (QRTCLICGDR…MGMNRKAIRE (76 aa)). Residues Cys60, Cys63, Cys77, Cys80, Cys96, Cys102, Cys112, and Cys115 each coordinate Zn(2+). NR C4-type zinc fingers lie at residues 60–80 (CLIC…CEGC) and 96–120 (CSRD…LLKC). Disordered regions lie at residues 131–150 (REDG…QISE) and 162–199 (FEEE…LSSS). Basic and acidic residues predominate over residues 165 to 177 (EANHWSNHGDSDH). The segment at 172 to 253 (HGDSDHSSPG…RSLDPQSYSL (82 aa)) is sufficient for interaction with UIMC1. Residues 187 to 199 (SNQPSPGSTLSSS) show a composition bias toward low complexity. Residues 249–480 (QSYSLIHQLL…HSCKTSVGKE (232 aa)) enclose the NR LBD domain.

This sequence belongs to the nuclear hormone receptor family. NR6 subfamily. As to quaternary structure, homodimer. Interacts with UIMC1. In terms of tissue distribution, shows highest expression in the germ cells of the adult testis.

It is found in the nucleus. Its function is as follows. Orphan nuclear receptor that binds to a response element containing the sequence 5'-TCAAGGTCA-3'. Acts as a regulator of embryonic stem cell pluripotency by mediating repression of POU5F1/OCT4: binds to the DR0 element within the POU5F1/OCT4 promoter and inhibits POU5F1/OCT4 expression during embryonic stem cell differentiation. Involved in the regulation of gene expression in germ cell development during gametogenesis. This Homo sapiens (Human) protein is Nuclear receptor subfamily 6 group A member 1 (NR6A1).